We begin with the raw amino-acid sequence, 127 residues long: Photosystem II reaction center Psb28 protein (127 aa).

The tract at residues 108 to 127 (LGYSQSQDSDQTEGADNQQA) is disordered. Over residues 109 to 127 (GYSQSQDSDQTEGADNQQA) the composition is skewed to polar residues.

The protein belongs to the Psb28 family. In terms of assembly, part of the photosystem II complex.

It localises to the cellular thylakoid membrane. The polypeptide is Photosystem II reaction center Psb28 protein (Synechococcus sp. (strain CC9605)).